A 396-amino-acid polypeptide reads, in one-letter code: Ribosomal RNA large subunit methyltransferase I (396 aa).

The PUA domain maps to 2-81 (SVRLVLAKGR…ESIDIAFFSR (80 aa)).

This sequence belongs to the methyltransferase superfamily. RlmI family.

It is found in the cytoplasm. It catalyses the reaction cytidine(1962) in 23S rRNA + S-adenosyl-L-methionine = 5-methylcytidine(1962) in 23S rRNA + S-adenosyl-L-homocysteine + H(+). In terms of biological role, specifically methylates the cytosine at position 1962 (m5C1962) of 23S rRNA. The sequence is that of Ribosomal RNA large subunit methyltransferase I from Escherichia coli (strain K12 / MC4100 / BW2952).